We begin with the raw amino-acid sequence, 412 residues long: Probable tRNA sulfurtransferase (412 aa).

The 106-residue stretch at 58 to 163 folds into the THUMP domain; it reads DEVIKQLGYV…SEGTYIYVGK (106 aa). ATP is bound by residues 181–182, 206–207, R265, G287, and Q296; these read ML and HF.

Belongs to the ThiI family.

Its subcellular location is the cytoplasm. It carries out the reaction [ThiI sulfur-carrier protein]-S-sulfanyl-L-cysteine + a uridine in tRNA + 2 reduced [2Fe-2S]-[ferredoxin] + ATP + H(+) = [ThiI sulfur-carrier protein]-L-cysteine + a 4-thiouridine in tRNA + 2 oxidized [2Fe-2S]-[ferredoxin] + AMP + diphosphate. It catalyses the reaction [ThiS sulfur-carrier protein]-C-terminal Gly-Gly-AMP + S-sulfanyl-L-cysteinyl-[cysteine desulfurase] + AH2 = [ThiS sulfur-carrier protein]-C-terminal-Gly-aminoethanethioate + L-cysteinyl-[cysteine desulfurase] + A + AMP + 2 H(+). It functions in the pathway cofactor biosynthesis; thiamine diphosphate biosynthesis. Functionally, catalyzes the ATP-dependent transfer of a sulfur to tRNA to produce 4-thiouridine in position 8 of tRNAs, which functions as a near-UV photosensor. Also catalyzes the transfer of sulfur to the sulfur carrier protein ThiS, forming ThiS-thiocarboxylate. This is a step in the synthesis of thiazole, in the thiamine biosynthesis pathway. The sulfur is donated as persulfide by IscS. This is Probable tRNA sulfurtransferase from Acholeplasma laidlawii (strain PG-8A).